The primary structure comprises 191 residues: Lipid A acyltransferase PagP (191 aa).

Residues 1–26 (MLKVNKYVILIIAFVSQMMFSTTAQA) form the signal peptide. Active-site residues include His63, Asp106, and Ser107.

It belongs to the lipid A palmitoyltransferase family. As to quaternary structure, homodimer.

The protein resides in the cell outer membrane. It carries out the reaction a lipid A + a 1,2-diacyl-sn-glycero-3-phosphocholine = a hepta-acyl lipid A + a 2-acyl-sn-glycero-3-phosphocholine. The enzyme catalyses a lipid IVA + a 1,2-diacyl-sn-glycero-3-phosphocholine = a lipid IVB + a 2-acyl-sn-glycero-3-phosphocholine. The catalysed reaction is a lipid IIA + a 1,2-diacyl-sn-glycero-3-phosphocholine = a lipid IIB + a 2-acyl-sn-glycero-3-phosphocholine. In terms of biological role, transfers a fatty acid residue from the sn-1 position of a phospholipid to the N-linked hydroxyfatty acid chain on the proximal unit of lipid A or its precursors. The protein is Lipid A acyltransferase PagP of Enterobacter lignolyticus (strain SCF1).